The sequence spans 433 residues: Leucine-rich repeat extensin-like protein 7 (433 aa).

Positions 1 to 21 (MRIYQPTLLIFTTVVLLSISA) are cleaved as a signal peptide. N-linked (GlcNAc...) asparagine glycosylation occurs at asparagine 71. 9 LRR repeats span residues 98 to 122 (VKTV…LGLL), 123 to 145 (TDIA…GFSQ), 146 to 170 (LSLL…VIGL), 171 to 194 (PKLK…LFDK), 196 to 217 (LDAL…MGNS), 219 to 239 (VSVL…SFGK), 241 to 265 (GKTL…MGLL), 266 to 289 (QNVT…MGQM), and 290 to 313 (ENLE…LCSL). A glycan (N-linked (GlcNAc...) asparagine) is linked at asparagine 267. N-linked (GlcNAc...) asparagine glycosylation is present at asparagine 340. The segment at 380–433 (FSPPPSQISPSSQPLAPAPSPTSPPLSTPPPARPCPPVYSPPPPPPLSLAPSMN) is disordered. The tract at residues 381-433 (SPPPSQISPSSQPLAPAPSPTSPPLSTPPPARPCPPVYSPPPPPPLSLAPSMN) is contains the Ser-Pro(4) repeats. The span at 395-427 (APAPSPTSPPLSTPPPARPCPPVYSPPPPPPLS) shows a compositional bias: pro residues.

In terms of processing, hydroxylated on proline residues in the S-P-P-P-P repeat. O-glycosylated on hydroxyprolines. Expressed in flowers and pollen.

Its subcellular location is the secreted. It localises to the cell wall. In terms of biological role, modulates cell morphogenesis by regulating cell wall formation and assembly, and/or growth polarization. In Arabidopsis thaliana (Mouse-ear cress), this protein is Leucine-rich repeat extensin-like protein 7 (LRX7).